A 162-amino-acid polypeptide reads, in one-letter code: Peptide deformylase-like (162 aa).

It belongs to the polypeptide deformylase family.

The protein is Peptide deformylase-like of Staphylococcus epidermidis (strain ATCC 35984 / DSM 28319 / BCRC 17069 / CCUG 31568 / BM 3577 / RP62A).